We begin with the raw amino-acid sequence, 117 residues long: Ribonuclease P protein component (117 aa).

Belongs to the RnpA family. As to quaternary structure, consists of a catalytic RNA component (M1 or rnpB) and a protein subunit.

The enzyme catalyses Endonucleolytic cleavage of RNA, removing 5'-extranucleotides from tRNA precursor.. RNaseP catalyzes the removal of the 5'-leader sequence from pre-tRNA to produce the mature 5'-terminus. It can also cleave other RNA substrates such as 4.5S RNA. The protein component plays an auxiliary but essential role in vivo by binding to the 5'-leader sequence and broadening the substrate specificity of the ribozyme. In Aliivibrio fischeri (strain ATCC 700601 / ES114) (Vibrio fischeri), this protein is Ribonuclease P protein component.